The primary structure comprises 690 residues: MSCFSHVMNPITGQNSWQERGDDYDYHLEVANAGFGDMLHDWERNQKYFAALKKTIAGMREAGREVHVLDIGTGTGILSMMAVEAGADSVTACEAFLPMANCAERILAANGAGDKVRLIRKRSTEIQVGEDMPRKANLLVAELLDTELIGEGAIGIYNHAHAELLTEDALCIPARARCYAQVAQSPLAAQWNSLKTIANLDGEPLLHPPEQLKSCQGEAALHDVQLSQLPSSAFRPLTDPVEIFQFDFQRKLEREKQRAQLLTLQSKQPGAAELVFYWWDIQLDDGGEILLSCAPYWAHPQLKELAAEKGKDHPLANVLPWRDHWMQAIYYIPKPLQLVEAGKSFHLSCHHDEYSLWFDAREEAPTKSVRRHTCTCDLHMTYSRSRIGQINQSTRNKRYLRYLEENIEAEKSNVLVLGNGCLLGLASSALGAASVLLHEPHRFSRRLLESIVTHNQLKNVQFLDKVEELEDSQLSALTHVFAEPYFLNAILPWDNFYFGTLLTKIKDRLPESVKISPCSARIYALPVEFLDLHKIRAPVGSCEGFDLRLFDEMVERSAEQAVSLVEAQPLWEYPCRALSEPQEVLNVEFSSFTQEHSLKGSIELKHPGTCNGVALWVDWQLVEENSPRSIVSSGPSEPVVPGEFVKWDMFVRQGVHFPRRPTGGITHLEWSTDFKPVLGELNFSFGQKKL.

2 consecutive SAM-dependent MTase PRMT-type domains span residues 14 to 357 (QNSW…YSLW) and 366 to 690 (TKSV…QKKL).

The protein belongs to the class I-like SAM-binding methyltransferase superfamily. Protein arginine N-methyltransferase family. PRMT7 subfamily.

Functionally, essential arginine methyltransferase that can both catalyze the formation of omega-N monomethylarginine (MMA) and symmetrical dimethylarginine (sDMA). Specifically mediates the symmetrical dimethylation of arginine residues in the small nuclear ribonucleoproteins SmD1 and SmD3. The chain is Protein arginine N-methyltransferase 7 (Art7) from Drosophila yakuba (Fruit fly).